Here is a 1034-residue protein sequence, read N- to C-terminus: Potassium-transporting ATPase alpha chain 1 (1034 aa).

The Cytoplasmic portion of the chain corresponds to 1–97; it reads MGKAENYEMY…NALRPPRGTP (97 aa). A phosphotyrosine mark is found at Y7 and Y10. The disordered stretch occupies residues 14-41; the sequence is LGPGPGGDMAAKMSKKKAGKGGGKKKEK. Residues 26–39 are compositionally biased toward basic residues; the sequence is MSKKKAGKGGGKKK. At S27 the chain carries Phosphoserine. A helical transmembrane segment spans residues 98-118; the sequence is EYVKFARQLAGGLQCLMWVAA. Over 119–141 the chain is Lumenal; sequence AICLIAFAIQASEGDLTTDDNLY. A helical transmembrane segment spans residues 142–162; it reads LALALIAVVVVTGCFGYYQEF. Topologically, residues 163-298 are cytoplasmic; sequence KSTNIIASFK…NEKTPIAIEI (136 aa). Polar residues predominate over residues 225 to 239; the sequence is NSSLTGESEPQTRSP. Residues 225–245 are disordered; the sequence is NSSLTGESEPQTRSPECTHES. Residues 299–318 traverse the membrane as a helical segment; that stretch reads EHFVDIIAGLAILFGATFFV. The Lumenal segment spans residues 319–330; the sequence is VAMCIGYTFLRA. Residues 331–348 traverse the membrane as a helical segment; it reads MVFFMAIVVAYVPEGLLA. K(+) contacts are provided by V339, A340, V342, and E344. Over 349-782 the chain is Cytoplasmic; it reads TVTVCLSLTA…EQGRLIFDNL (434 aa). D386 (4-aspartylphosphate intermediate) is an active-site residue. D386 and T388 together coordinate Mg(2+). A phosphoserine mark is found at S462 and S600. Positions 727 and 731 each coordinate Mg(2+). The chain crosses the membrane as a helical span at residues 783–802; the sequence is KKSIAYTLTKNIPELTPYLI. Position 796 (E796) interacts with K(+). Over 803-812 the chain is Lumenal; it reads YITVSVPLPL. Residues 813–833 form a helical membrane-spanning segment; sequence GCITILFIELCTDIFPSVSLA. A K(+)-binding site is contributed by E821. The Cytoplasmic portion of the chain corresponds to 834-853; it reads YEKAESDIMHLRPRNPKRDR. Position 839 is a phosphoserine (S839). The chain crosses the membrane as a helical span at residues 854–876; the sequence is LVNEPLAAYSYFQIGAIQSFAGF. Residues 877-928 are Lumenal-facing; the sequence is TDYFTAMAQEGWFPLLCVGLRPYWENHHLQDLQDSYGQEWTFGQRLYQQYTC. Residues 929–948 form a helical membrane-spanning segment; it reads YTVFFISIEMCQIADVLIRK. At 949-962 the chain is on the cytoplasmic side; the sequence is TRRLSAFQQGFFRN. The residue at position 953 (S953) is a Phosphoserine; by PKA. Residues 963 to 981 traverse the membrane as a helical segment; that stretch reads RILVIAIVFQVCIGCFLCY. Topologically, residues 982–996 are lumenal; sequence CPGMPNIFNFMPIRY. A helical transmembrane segment spans residues 997–1017; sequence QWWLVPMPFGLLIFVYDEIRK. At 1018–1034 the chain is on the cytoplasmic side; that stretch reads LGVRCCPGSWWDQELYY.

This sequence belongs to the cation transport ATPase (P-type) (TC 3.A.3) family. Type IIC subfamily. In terms of assembly, the gastric H(+)/K(+) ATPase pump is composed of the catalytic alpha subunit ATP4A and the regulatory beta subunit ATP4B. Interacts (via the P-domain) with ATP4B (via N-terminus); this interaction stabilizes the lumenal-open E2 conformation state and prevents the reverse reaction of the transport cycle.

Its subcellular location is the apical cell membrane. The catalysed reaction is K(+)(out) + ATP + H2O + H(+)(in) = K(+)(in) + ADP + phosphate + 2 H(+)(out). Functionally, the catalytic subunit of the gastric H(+)/K(+) ATPase pump which transports H(+) ions in exchange for K(+) ions across the apical membrane of parietal cells. Uses ATP as an energy source to pump H(+) ions to the gastric lumen while transporting K(+) ion from the lumen into the cell. Remarkably generates a million-fold proton gradient across the gastric parietal cell membrane, acidifying the gastric juice down to pH 1. Within a transport cycle, the transfer of a H(+) ion across the membrane is coupled to ATP hydrolysis and is associated with a transient phosphorylation that shifts the pump conformation from inward-facing (E1) to outward-facing state (E2). The release of the H(+) ion in the stomach lumen is followed by binding of K(+) ion converting the pump conformation back to the E1 state. The sequence is that of Potassium-transporting ATPase alpha chain 1 (ATP4A) from Canis lupus familiaris (Dog).